A 353-amino-acid polypeptide reads, in one-letter code: H(2)-forming methylenetetrahydromethanopterin dehydrogenase-related protein MJ1338 (353 aa).

The protein belongs to the HMD family.

In Methanocaldococcus jannaschii (strain ATCC 43067 / DSM 2661 / JAL-1 / JCM 10045 / NBRC 100440) (Methanococcus jannaschii), this protein is H(2)-forming methylenetetrahydromethanopterin dehydrogenase-related protein MJ1338.